The primary structure comprises 318 residues: Tyrosine recombinase XerC (318 aa).

In terms of domain architecture, Core-binding (CB) spans 17 to 108; sequence PEVMAERRRW…GLRSFLRYLE (92 aa). Residues 129–312 enclose the Tyr recombinase domain; it reads SLPKALTDRE…DSARLLEIYD (184 aa). Catalysis depends on residues Arg-172, Lys-196, His-264, Arg-267, and His-290. The active-site O-(3'-phospho-DNA)-tyrosine intermediate is the Tyr-299.

Belongs to the 'phage' integrase family. XerC subfamily. As to quaternary structure, forms a cyclic heterotetrameric complex composed of two molecules of XerC and two molecules of XerD.

The protein localises to the cytoplasm. Functionally, site-specific tyrosine recombinase, which acts by catalyzing the cutting and rejoining of the recombining DNA molecules. The XerC-XerD complex is essential to convert dimers of the bacterial chromosome into monomers to permit their segregation at cell division. It also contributes to the segregational stability of plasmids. This Rhizobium meliloti (strain 1021) (Ensifer meliloti) protein is Tyrosine recombinase XerC.